The following is a 305-amino-acid chain: Ribonuclease BN (305 aa).

Residues His64, His66, Asp68, His69, His141, Asp212, and His270 each coordinate Zn(2+). Asp68 acts as the Proton acceptor in catalysis.

Belongs to the RNase Z family. RNase BN subfamily. Homodimer. Requires Zn(2+) as cofactor.

Functionally, zinc phosphodiesterase, which has both exoribonuclease and endoribonuclease activities. In Escherichia coli O45:K1 (strain S88 / ExPEC), this protein is Ribonuclease BN.